The primary structure comprises 320 residues: Agamous-like MADS-box protein AGL90 (320 aa).

Residues 1–59 (MKKVKLSLIANERSRKTSFMKRKNGIFKKLHELSTLCGVQACALIYSPFIPVPESWPSR) form the MADS-box domain. Residues 80 to 115 (KMMDQETHLMERITKAKEQLKNLAAENRELQVRRFM) are a coiled coil.

Interacts with AGL62.

The protein localises to the nucleus. In terms of biological role, probable transcription factor. The sequence is that of Agamous-like MADS-box protein AGL90 (AGL90) from Arabidopsis thaliana (Mouse-ear cress).